The following is a 99-amino-acid chain: RNA-binding protein Hfq (99 aa).

Residues 9-68 (DPFLNALRRERVPVSIYLVNGIKLQGQIESFDQFVILLKNTVSQMVYKHAISTVVPSRPV) form the Sm domain. Residues 64–99 (PSRPVSHHSNNPGGSNNYHGSNTTAQQQSQDADDAE) form a disordered region. Over residues 70 to 93 (HHSNNPGGSNNYHGSNTTAQQQSQ) the composition is skewed to low complexity.

This sequence belongs to the Hfq family. As to quaternary structure, homohexamer.

Its function is as follows. RNA chaperone that binds small regulatory RNA (sRNAs) and mRNAs to facilitate mRNA translational regulation in response to envelope stress, environmental stress and changes in metabolite concentrations. Also binds with high specificity to tRNAs. This Pectobacterium atrosepticum (strain SCRI 1043 / ATCC BAA-672) (Erwinia carotovora subsp. atroseptica) protein is RNA-binding protein Hfq.